The sequence spans 275 residues: Phosphonoacetaldehyde hydrolase (275 aa).

Asp-15 (nucleophile) is an active-site residue. Mg(2+) is bound by residues Asp-15 and Ala-17. The active-site Schiff-base intermediate with substrate is Lys-56. A Mg(2+)-binding site is contributed by Asp-189.

The protein belongs to the HAD-like hydrolase superfamily. PhnX family. Homodimer. Mg(2+) serves as cofactor.

It catalyses the reaction phosphonoacetaldehyde + H2O = acetaldehyde + phosphate + H(+). Its activity is regulated as follows. Inhibited by phosphite, moderately inhibited by phosphonic acids, the corresponding aminophosphonic acids activate the enzyme. Functionally, involved in phosphonate degradation. The polypeptide is Phosphonoacetaldehyde hydrolase (Pseudomonas aeruginosa (strain ATCC 15692 / DSM 22644 / CIP 104116 / JCM 14847 / LMG 12228 / 1C / PRS 101 / PAO1)).